Consider the following 301-residue polypeptide: Putative dynamin-related protein 4A (301 aa).

Residues 59–301 enclose the Dynamin-type G domain; that stretch reads GIQLPTIVVV…LIDGDIVGIL (243 aa). The interval 69–76 is G1 motif; that stretch reads GDQSSGKS. A GTP-binding site is contributed by 69–76; that stretch reads GDQSSGKS. Positions 94 to 96 are G2 motif; it reads CTR. The tract at residues 168–171 is G3 motif; the sequence is DLPG. Residues 168–172 and 237–240 each bind GTP; these read DLPGI and TKAD. Residues 237–240 are G4 motif; that stretch reads TKAD. Glu270 is a region of interest (G5 motif).

The protein belongs to the TRAFAC class dynamin-like GTPase superfamily. Dynamin/Fzo/YdjA family.

This Arabidopsis thaliana (Mouse-ear cress) protein is Putative dynamin-related protein 4A (DRP4A).